The sequence spans 340 residues: Phenylalanine--tRNA ligase alpha subunit (340 aa).

Glu254 serves as a coordination point for Mg(2+).

It belongs to the class-II aminoacyl-tRNA synthetase family. Phe-tRNA synthetase alpha subunit type 1 subfamily. In terms of assembly, tetramer of two alpha and two beta subunits. It depends on Mg(2+) as a cofactor.

The protein resides in the cytoplasm. The catalysed reaction is tRNA(Phe) + L-phenylalanine + ATP = L-phenylalanyl-tRNA(Phe) + AMP + diphosphate + H(+). This is Phenylalanine--tRNA ligase alpha subunit from Chloroherpeton thalassium (strain ATCC 35110 / GB-78).